The sequence spans 321 residues: Cytochrome f (321 aa).

Residues 1–35 form the signal peptide; the sequence is MQNTNTLNWINKLIYLSISIPIFFLILVTTYPNSV. Heme is bound by residues Tyr38, Cys58, Cys61, and His62. The helical transmembrane segment at 287-307 threads the bilayer; that stretch reads MEGLILFFISVILAQVFLVLK.

It belongs to the cytochrome f family. As to quaternary structure, the 4 large subunits of the cytochrome b6-f complex are cytochrome b6, subunit IV (17 kDa polypeptide, petD), cytochrome f and the Rieske protein, while the 4 small subunits are PetG, PetL, PetM and PetN. The complex functions as a dimer. Heme serves as cofactor.

The protein resides in the plastid. It localises to the chloroplast thylakoid membrane. Its function is as follows. Component of the cytochrome b6-f complex, which mediates electron transfer between photosystem II (PSII) and photosystem I (PSI), cyclic electron flow around PSI, and state transitions. The chain is Cytochrome f from Chara vulgaris (Common stonewort).